A 507-amino-acid chain; its full sequence is Alkyl hydroperoxide reductase subunit F (507 aa).

207 to 222 (DVLIVGGGPASGSAAI) contributes to the FAD binding site. Residues cysteine 335 and cysteine 338 are joined by a disulfide bond. 347–361 (DVAVIGGGNSGVEAA) contributes to the NAD(+) binding site. 467 to 477 (TNVPGIFAAGD) is a binding site for FAD.

The protein belongs to the class-II pyridine nucleotide-disulfide oxidoreductase family. As to quaternary structure, homodimer. Requires FAD as cofactor.

Serves to protect the cell against DNA damage by alkyl hydroperoxides. It can use either NADH or NADPH as electron donor for direct reduction of redox dyes or of alkyl hydroperoxides when combined with the AhpC protein. This Staphylococcus epidermidis (strain ATCC 35984 / DSM 28319 / BCRC 17069 / CCUG 31568 / BM 3577 / RP62A) protein is Alkyl hydroperoxide reductase subunit F (ahpF).